A 91-amino-acid polypeptide reads, in one-letter code: Early E3B 10.4 kDa protein (91 aa).

The signal sequence occupies residues Met-1–Ala-22. The Lumenal segment spans residues Ala-23–Ala-34. A helical membrane pass occupies residues Phe-35–Ile-60. The Cytoplasmic portion of the chain corresponds to Gln-61–Leu-91.

Belongs to the adenoviridae E3B family.

It localises to the host endoplasmic reticulum membrane. Functionally, down-regulates the EGF receptor. This chain is Early E3B 10.4 kDa protein, found in Homo sapiens (Human).